Consider the following 267-residue polypeptide: DNA repair protein RecO (267 aa).

This sequence belongs to the RecO family.

Involved in DNA repair and RecF pathway recombination. The polypeptide is DNA repair protein RecO (Prochlorococcus marinus (strain MIT 9303)).